The primary structure comprises 676 residues: Heat shock cognate HSP70 protein (676 aa).

The disordered stretch occupies residues 613-676 (SARREGKDGW…RIEAINANTE (64 aa)). The span at 630–646 (GSGDDNDGDDNSDEEDE) shows a compositional bias: acidic residues.

This sequence belongs to the heat shock protein 70 family.

The protein is Heat shock cognate HSP70 protein of Trypanosoma brucei brucei.